We begin with the raw amino-acid sequence, 196 residues long: Small ribosomal subunit protein uS4c (196 aa).

Positions L15–Q43 are disordered. The S4 RNA-binding domain maps to M89–N150.

This sequence belongs to the universal ribosomal protein uS4 family. As to quaternary structure, part of the 30S ribosomal subunit. Contacts protein S5. The interaction surface between S4 and S5 is involved in control of translational fidelity.

The protein resides in the plastid. It is found in the chloroplast. Functionally, one of the primary rRNA binding proteins, it binds directly to 16S rRNA where it nucleates assembly of the body of the 30S subunit. Its function is as follows. With S5 and S12 plays an important role in translational accuracy. The polypeptide is Small ribosomal subunit protein uS4c (rps4) (Bothriochloa ischaemum (Yellow bluestem)).